Reading from the N-terminus, the 354-residue chain is Guanine nucleotide-binding protein G(o) subunit alpha (354 aa).

Gly2 carries N-myristoyl glycine lipidation. Cys3 is lipidated: S-palmitoyl cysteine. Positions 32-354 constitute a G-alpha domain; it reads KDVKLLLLGA…ANNLRGCGLY (323 aa). The G1 motif stretch occupies residues 35–48; it reads KLLLLGAGESGKST. GTP-binding residues include Glu43, Lys46, Ser47, Thr48, Ser152, Leu176, Arg177, Thr178, and Arg179. Ser47 contributes to the Mg(2+) binding site. A G2 motif region spans residues 174–182; sequence DILRTRVKT. Arg179 carries the post-translational modification ADP-ribosylarginine; by cholera toxin. Residue Thr182 coordinates Mg(2+). The tract at residues 197-206 is G3 motif; it reads FRLFDVGGQR. Gln205 bears the 5-glutamyl histamine mark. The tract at residues 266–273 is G4 motif; it reads ILFLNKKD. The GTP site is built by Asn270, Asp273, and Cys325. Positions 324 to 329 are G5 motif; sequence TCATDT. A lipid anchor (S-palmitoyl cysteine) is attached at Cys351. At Cys351 the chain carries ADP-ribosylcysteine; by pertussis toxin.

This sequence belongs to the G-alpha family. G(i/o/t/z) subfamily. As to quaternary structure, g proteins are composed of 3 units; alpha, beta and gamma. The alpha chain contains the guanine nucleotide binding site. Forms a complex with GNB1 and GNG3. Interacts with RGS14. Interacts with RGS16. Interacts with RGS19. Interacts (when palmitoylated) with ADGRG3. Histaminylated at Gln-205 residues by TGM2. Post-translationally, palmitoylated at Cys-351, leading to binding to ADGRG3.

Its subcellular location is the cell membrane. It is found in the membrane. The catalysed reaction is GTP + H2O = GDP + phosphate + H(+). The GTPase activity is promoted by GTPAse activators, such as RGS14, RGS16 and RGS19. Its function is as follows. Guanine nucleotide-binding proteins (G proteins) function as transducers downstream of G protein-coupled receptors (GPCRs) in numerous signaling cascades. The alpha chain contains the guanine nucleotide binding site and alternates between an active, GTP-bound state and an inactive, GDP-bound state. Signaling by an activated GPCR promotes GDP release and GTP binding. The alpha subunit has a low GTPase activity that converts bound GTP to GDP, thereby terminating the signal. Both GDP release and GTP hydrolysis are modulated by numerous regulatory proteins. Signaling is mediated via effector proteins, such as adenylate cyclase. Inhibits adenylate cyclase activity, leading to decreased intracellular cAMP levels. This Homo sapiens (Human) protein is Guanine nucleotide-binding protein G(o) subunit alpha (GNAO1).